The primary structure comprises 648 residues: Transmembrane 9 superfamily member 8 (648 aa).

The first 33 residues, 1-33 (MAMEFLRSSRRILESSGCAIALIFLLFIHGAHS), serve as a signal peptide directing secretion. Residues 34–285 (FYLPGVAPQD…YLLMSDNQIH (252 aa)) are Lumenal-facing. A helical membrane pass occupies residues 286–306 (WFSIVNSLMIVLFLSGMVAMI). Residues 307 to 355 (MLRTLYRDISRYNELETQEEAQEETGWKLVHGDVFRLPTNSDLLCVYVG) are Cytoplasmic-facing. The chain crosses the membrane as a helical span at residues 356-376 (TGVQCLGMVFVTMIFAMLGFL). The Lumenal segment spans residues 377–381 (SPSNR). A helical transmembrane segment spans residues 382–402 (GGLMTAMLLLWVFMGLFAGYA). At 403-422 (SSRLYKMFKGTEWKRIAFRT) the chain is on the cytoplasmic side. The helical transmembrane segment at 423-443 (AFLFPAVVSAIFFVLNALIWG) threads the bilayer. The Lumenal segment spans residues 444 to 455 (QKSSGAVPFGTM). A helical membrane pass occupies residues 456 to 476 (FALIFLWFGISVPLVFVGGYI). Residues 477 to 506 (GFKKPAADDPVKTNKIPRQIPEQAWYMNPV) lie on the Cytoplasmic side of the membrane. The helical transmembrane segment at 507–527 (FSILIGGILPFGAVFIELFFI) threads the bilayer. Residues 528–538 (LTSIWLNQFYY) lie on the Lumenal side of the membrane. A helical membrane pass occupies residues 539 to 559 (IFGFLFLVFVILIVTCAEITV). Residues 560 to 577 (VLCYFQLCSEDYLWWWRS) lie on the Cytoplasmic side of the membrane. The helical transmembrane segment at 578 to 598 (YLTSGSSALYLFLYATFYFFT) threads the bilayer. Topologically, residues 599-604 (KLQITK) are lumenal. A helical membrane pass occupies residues 605–625 (LVSAMLYFGYMLIASYAFFVL). Residues 626 to 648 (TGTIGFYACLWFTRLIYSSVKID) are Cytoplasmic-facing. The Endoplasmic reticulum export signal motif lies at 637 to 642 (FTRLIY). The Golgi retention signal signature appears at 646–648 (KID).

This sequence belongs to the nonaspanin (TM9SF) (TC 9.A.2) family.

It is found in the endosome membrane. Its subcellular location is the golgi apparatus membrane. The polypeptide is Transmembrane 9 superfamily member 8 (Arabidopsis thaliana (Mouse-ear cress)).